We begin with the raw amino-acid sequence, 141 residues long: Mitochondrial import inner membrane translocase subunit Tim16 (141 aa).

2 disordered regions span residues 34 to 53 and 108 to 141; these read AARR…SNLR and LDHE…RQRR. The tract at residues 60 to 113 is J-like; the sequence is EAKQILNIDDPKNVDAITKNYEHLFQVNERSKGGSFYIQSKVFRAKERLDHEIK. Over residues 108–118 the composition is skewed to basic and acidic residues; it reads LDHEIKAHEQP.

Belongs to the TIM16/PAM16 family. As to quaternary structure, probable component of the PAM complex at least composed of a mitochondrial HSP70 protein, Roe1, TIM44, blp/TIM16 and TIM14. Associates with the TIM23 complex. Expressed in distinct cells in the embryonic and larval nervous system.

It is found in the mitochondrion inner membrane. Its function is as follows. Regulates ATP-dependent protein translocation into the mitochondrial matrix. Essential for larval development. The protein is Mitochondrial import inner membrane translocase subunit Tim16 (blp) of Drosophila melanogaster (Fruit fly).